The primary structure comprises 291 residues: MASKQLKLVIITGMSGAGKTVAMQSLEDLGYFCVDNLPPSLLPKFWELMKESDKMDKIALVMDLRGREFFDSIEPALDELDNTNFITTKILFLEADDKVLVSRYKETRRHHPLEPNGSVLDGINAERELLSDLKGRSQLVINTSNMAPRELRERINNEFQTEDKDVFNVQLMSFGFKYGIPIDADLVFDVRFLPNPHYIDKMRPLTGLDEDVYEYVMKWPETMAFLDKLVDLLMFTLPFYKREGKTQLVIAIGCTGGQHRSVALTEYVGKAIQQKYETTISHRDMKRRKER.

ATP is bound at residue 13 to 20 (GMSGAGKT). GTP is bound at residue 63–66 (DLRG).

The protein belongs to the RapZ-like family.

In terms of biological role, displays ATPase and GTPase activities. The protein is Nucleotide-binding protein lin2617 of Listeria innocua serovar 6a (strain ATCC BAA-680 / CLIP 11262).